A 355-amino-acid chain; its full sequence is Probable L-aspartate decarboxylase (355 aa).

The residue at position 210 (K210) is an N6-(pyridoxal phosphate)lysine.

The protein belongs to the group II decarboxylase family. MfnA subfamily. Pyridoxal 5'-phosphate is required as a cofactor.

It carries out the reaction L-aspartate + H(+) = beta-alanine + CO2. The protein operates within cofactor biosynthesis; coenzyme A biosynthesis. In terms of biological role, catalyzes the decarboxylation of L-aspartate to produce beta-alanine. This is Probable L-aspartate decarboxylase from Halobacterium salinarum (strain ATCC 29341 / DSM 671 / R1).